A 291-amino-acid polypeptide reads, in one-letter code: D-alanine--D-alanine ligase (291 aa).

The 193-residue stretch at 99–291 (KRIVKSLGIN…FKKLISIIIT (193 aa)) folds into the ATP-grasp domain. An ATP-binding site is contributed by 125 to 179 (EWNKFPAVVKPVREGSSVGLKIVESLEELKEYALDLLKKTERVMVEEFVEGRDMT). Mg(2+) contacts are provided by Asp-245, Glu-258, and Asn-260.

This sequence belongs to the D-alanine--D-alanine ligase family. Mg(2+) serves as cofactor. Mn(2+) is required as a cofactor.

Its subcellular location is the cytoplasm. The catalysed reaction is 2 D-alanine + ATP = D-alanyl-D-alanine + ADP + phosphate + H(+). The protein operates within cell wall biogenesis; peptidoglycan biosynthesis. Its function is as follows. Cell wall formation. This Aquifex aeolicus (strain VF5) protein is D-alanine--D-alanine ligase.